A 207-amino-acid chain; its full sequence is Thiamine-phosphate synthase (207 aa).

Residues 37-41 and asparagine 69 each bind 4-amino-2-methyl-5-(diphosphooxymethyl)pyrimidine; that span reads QLREK. 2 residues coordinate Mg(2+): aspartate 70 and aspartate 89. Residue serine 108 coordinates 4-amino-2-methyl-5-(diphosphooxymethyl)pyrimidine. 134 to 136 serves as a coordination point for 2-[(2R,5Z)-2-carboxy-4-methylthiazol-5(2H)-ylidene]ethyl phosphate; that stretch reads TGS. Residue lysine 137 participates in 4-amino-2-methyl-5-(diphosphooxymethyl)pyrimidine binding. 2-[(2R,5Z)-2-carboxy-4-methylthiazol-5(2H)-ylidene]ethyl phosphate-binding positions include glycine 165 and 185–186; that span reads IS.

It belongs to the thiamine-phosphate synthase family. Mg(2+) is required as a cofactor.

It carries out the reaction 2-[(2R,5Z)-2-carboxy-4-methylthiazol-5(2H)-ylidene]ethyl phosphate + 4-amino-2-methyl-5-(diphosphooxymethyl)pyrimidine + 2 H(+) = thiamine phosphate + CO2 + diphosphate. The catalysed reaction is 2-(2-carboxy-4-methylthiazol-5-yl)ethyl phosphate + 4-amino-2-methyl-5-(diphosphooxymethyl)pyrimidine + 2 H(+) = thiamine phosphate + CO2 + diphosphate. It catalyses the reaction 4-methyl-5-(2-phosphooxyethyl)-thiazole + 4-amino-2-methyl-5-(diphosphooxymethyl)pyrimidine + H(+) = thiamine phosphate + diphosphate. Its pathway is cofactor biosynthesis; thiamine diphosphate biosynthesis; thiamine phosphate from 4-amino-2-methyl-5-diphosphomethylpyrimidine and 4-methyl-5-(2-phosphoethyl)-thiazole: step 1/1. In terms of biological role, condenses 4-methyl-5-(beta-hydroxyethyl)thiazole monophosphate (THZ-P) and 2-methyl-4-amino-5-hydroxymethyl pyrimidine pyrophosphate (HMP-PP) to form thiamine monophosphate (TMP). In Desulfitobacterium hafniense (strain Y51), this protein is Thiamine-phosphate synthase.